We begin with the raw amino-acid sequence, 199 residues long: NAD(P)H dehydrogenase (quinone) (199 aa).

One can recognise a Flavodoxin-like domain in the interval 4–190; sequence VLVLYYSTYG…DGARFLGQHV (187 aa). FMN-binding positions include 10-15 and 78-80; these read STYGHI and TRF. Tyr-12 lines the NAD(+) pocket. Trp-98 contacts substrate. Residues 113-119 and His-134 each bind FMN; that span reads STATQHG.

It belongs to the WrbA family. FMN is required as a cofactor.

The enzyme catalyses a quinone + NADH + H(+) = a quinol + NAD(+). It carries out the reaction a quinone + NADPH + H(+) = a quinol + NADP(+). This chain is NAD(P)H dehydrogenase (quinone), found in Gluconacetobacter diazotrophicus (strain ATCC 49037 / DSM 5601 / CCUG 37298 / CIP 103539 / LMG 7603 / PAl5).